Consider the following 335-residue polypeptide: Glutamyl-tRNA reductase (335 aa).

Substrate is bound by residues 60 to 63 (TCHR), serine 110, 115 to 117 (ETE), and glutamine 121. Cysteine 61 serves as the catalytic Nucleophile. Position 189-194 (189-194 (GYSEIN)) interacts with NADP(+).

It belongs to the glutamyl-tRNA reductase family. As to quaternary structure, homodimer.

The enzyme catalyses (S)-4-amino-5-oxopentanoate + tRNA(Glu) + NADP(+) = L-glutamyl-tRNA(Glu) + NADPH + H(+). It participates in porphyrin-containing compound metabolism; protoporphyrin-IX biosynthesis; 5-aminolevulinate from L-glutamyl-tRNA(Glu): step 1/2. In terms of biological role, catalyzes the NADPH-dependent reduction of glutamyl-tRNA(Glu) to glutamate 1-semialdehyde (GSA). This Chlamydia trachomatis serovar L2 (strain ATCC VR-902B / DSM 19102 / 434/Bu) protein is Glutamyl-tRNA reductase.